The following is a 94-amino-acid chain: Phosphoribosyl-ATP pyrophosphatase (94 aa).

Belongs to the PRA-PH family.

Its subcellular location is the cytoplasm. It catalyses the reaction 1-(5-phospho-beta-D-ribosyl)-ATP + H2O = 1-(5-phospho-beta-D-ribosyl)-5'-AMP + diphosphate + H(+). It functions in the pathway amino-acid biosynthesis; L-histidine biosynthesis; L-histidine from 5-phospho-alpha-D-ribose 1-diphosphate: step 2/9. This chain is Phosphoribosyl-ATP pyrophosphatase, found in Saccharolobus islandicus (strain M.16.27) (Sulfolobus islandicus).